Consider the following 315-residue polypeptide: MQCNDVQATEPDIKVSLTRVGVTNLKKLVKLKRKNKRDIVLLPTFEVFVDLPSSQKGIHMSRSPEVIEEVVENILLEKEIYGVEDLSVEIVMKLFEKHEYATRAEIMLYSDYMMEEKSPVTQKDSQEIGKIIARAYGVKDENGKIAVKKMVGAEVVGITACPCAQNMLKENAVANLKEKGFSSEEIEKILDSVTIATHNQRGIGTVMIEVPNGYAVGISKIIKIIKNSMSGEVYELLKRSDEAFVVEAAHKNPKFVEDCAREMIKRVVDVFDYLPEDTQVLVRQVNKESIHRHDAFAERNSTIRELRDELKTLTN.

The protein belongs to the GTP cyclohydrolase IV family. In terms of assembly, homodimer. Requires Fe(2+) as cofactor.

The catalysed reaction is GTP + H2O = 7,8-dihydroneopterin 2',3'-cyclic phosphate + formate + diphosphate + H(+). It participates in cofactor biosynthesis; 5,6,7,8-tetrahydromethanopterin biosynthesis. Its function is as follows. Converts GTP to 7,8-dihydro-D-neopterin 2',3'-cyclic phosphate, the first intermediate in the biosynthesis of coenzyme methanopterin. The sequence is that of GTP cyclohydrolase MptA from Methanococcus maripaludis (strain C5 / ATCC BAA-1333).